The primary structure comprises 571 residues: MGSTLGCHRSIPRDPSDLSHSRKFSAACNFSNILVNQERLNINTATEEELMTLPGVTRAVARSIVEYREYIGGFKKVEDLALVSGVGATKLEQVKFEICVSSKGSSAQHSPSSLRRDLMAEQQPHHLATAAAVPLTPRVNINTATPAQLMSVRGLTEKMAVSIVDYRREHGPFRSVEDLVRMGGINAAFLDRIRHQVFAERSRPPSTHTNGGLTFTAKPHPSPTSLSLQSEDLDLPPGGPTQIISTRPSVEAFGGTRDGRPVLRLATWNLQGCSVEKANNPGVREVVCMTLLENSIKLLAVQELLDREALEKFCVELNQPILPNIRKWKGPRGCWKAVVSETPSTQLQKGAGFAGFLWDTAAGVELRDAAWQESSPGNGHGKPVGPSPYLARFKVGSHDLTLVNLHLATLTLPGGENLSKNHSDSHRWASFTQTLQETLKGEKDVIVLGDFGQGPDSSDYDILRKEKFHHLIPAHTFTNISTKNPQGSKALDNIWISKSLKKVFTGHWAVVREGLTNPWIPDNWSWGGVASEHCPVLAEFYTEKDWTRKEGPRSGNGLTLERSEANIKHER.

The interval 1 to 20 (MGSTLGCHRSIPRDPSDLSH) is disordered. G2 is lipidated: N-myristoyl glycine. Basic and acidic residues predominate over residues 11 to 20 (IPRDPSDLSH). Phosphoserine occurs at positions 16, 21, and 25. One can recognise a HhH domain in the interval 38 to 67 (ERLNINTATEEELMTLPGVTRAVARSIVEY). Phosphoserine occurs at positions 106, 110, 162, and 175. The segment at 202-227 (SRPPSTHTNGGLTFTAKPHPSPTSLS) is disordered. Over residues 204-213 (PPSTHTNGGL) the composition is skewed to polar residues. At T267 the chain carries Phosphothreonine. The residue at position 430 (S430) is a Phosphoserine. Residues 548 to 571 (RKEGPRSGNGLTLERSEANIKHER) form a disordered region. The segment covering 561 to 571 (ERSEANIKHER) has biased composition (basic and acidic residues).

This Bos taurus (Bovine) protein is Endonuclease/exonuclease/phosphatase family domain-containing protein 1 (EEPD1).